The sequence spans 530 residues: Autoinducer-2 kinase (530 aa).

This sequence belongs to the FGGY kinase family.

It is found in the cytoplasm. The enzyme catalyses (S)-4,5-dihydroxypentane-2,3-dione + ATP = (2S)-2-hydroxy-3,4-dioxopentyl phosphate + ADP + H(+). Catalyzes the phosphorylation of autoinducer-2 (AI-2) to phospho-AI-2, which subsequently inactivates the transcriptional regulator LsrR and leads to the transcription of the lsr operon. Phosphorylates the ring-open form of (S)-4,5-dihydroxypentane-2,3-dione (DPD), which is the precursor to all AI-2 signaling molecules, at the C5 position. In Escherichia coli O139:H28 (strain E24377A / ETEC), this protein is Autoinducer-2 kinase.